Reading from the N-terminus, the 655-residue chain is p-hydroxybenzoic acid efflux pump subunit AaeB (655 aa).

10 helical membrane passes run 13 to 33 (FAVKLATAIVLALFVGFHFQL), 38 to 58 (WAVLTAAIVAAGPAFAAGGEP), 69 to 89 (LRIIGTFIGCIAGLVIIIAMI), 93 to 113 (LLMILVCCIWAGFCTWISSLV), 121 to 141 (WGLAGYTALIIVITIQPEPLL), 152 to 172 (EIVIGIVCAIMADLLFSPRSI), 370 to 390 (LFWLWTGWTSGSGVMVMIAVV), 407 to 427 (FIYGTLAALPLGLLYFLVIIP), 431 to 451 (QSMLLLCISLAVLGFFLGIEV), and 482 to 502 (FLDSALGQIVGCVLAFTVILL).

It belongs to the aromatic acid exporter ArAE (TC 2.A.85) family.

It is found in the cell inner membrane. Functionally, forms an efflux pump with AaeA. Could function as a metabolic relief valve, allowing to eliminate certain compounds when they accumulate to high levels in the cell. The protein is p-hydroxybenzoic acid efflux pump subunit AaeB of Shigella dysenteriae serotype 1 (strain Sd197).